Here is a 198-residue protein sequence, read N- to C-terminus: MVITLPKLKYALNALSPHISEETLNFHYNKHHAGYVNKLNTLIKDTPFAEKSLLDIVKESSGAIFNNAAQIWNHTFYWDSMGPDCGGEPHGGIKEKIQEDFGSFNNFKEQFSNILCGHFGSGWGWLALNNNNKLVILQTHDAGNPIKDNTGIPILTCDIWEHAYCIDYRNDRASYVKAWWNLVNWNFANENLKKAMQK.

Residues His-27, His-74, Asp-158, and His-162 each coordinate Fe cation.

The protein belongs to the iron/manganese superoxide dismutase family. Homodimer. It depends on Fe cation as a cofactor.

The protein localises to the cytoplasm. It carries out the reaction 2 superoxide + 2 H(+) = H2O2 + O2. In terms of biological role, destroys superoxide anion radicals which are normally produced within the cells and which are toxic to biological systems. This chain is Superoxide dismutase [Fe] (SODB), found in Plasmodium malariae.